Consider the following 185-residue polypeptide: Isopentenyl-diphosphate Delta-isomerase (185 aa).

Mn(2+) is bound by residues H27 and H34. Residues 32–168 enclose the Nudix hydrolase domain; sequence PLHLAFSCHL…PWAFSPWLTL (137 aa). C69 is a catalytic residue. C69 provides a ligand contact to Mg(2+). A Mn(2+)-binding site is contributed by H71. E89 provides a ligand contact to Mg(2+). Mn(2+) contacts are provided by E118 and E120. E120 is a catalytic residue.

This sequence belongs to the IPP isomerase type 1 family. Mg(2+) serves as cofactor. Mn(2+) is required as a cofactor.

The protein resides in the cytoplasm. It catalyses the reaction isopentenyl diphosphate = dimethylallyl diphosphate. It functions in the pathway isoprenoid biosynthesis; dimethylallyl diphosphate biosynthesis; dimethylallyl diphosphate from isopentenyl diphosphate: step 1/1. Functionally, catalyzes the 1,3-allylic rearrangement of the homoallylic substrate isopentenyl (IPP) to its highly electrophilic allylic isomer, dimethylallyl diphosphate (DMAPP). This is Isopentenyl-diphosphate Delta-isomerase from Leifsonia xyli subsp. xyli (strain CTCB07).